An 873-amino-acid polypeptide reads, in one-letter code: DNA mismatch repair protein MutS (873 aa).

Position 628-635 (628-635) interacts with ATP; the sequence is GPNMAGKS.

Belongs to the DNA mismatch repair MutS family.

Its function is as follows. This protein is involved in the repair of mismatches in DNA. It is possible that it carries out the mismatch recognition step. This protein has a weak ATPase activity. The protein is DNA mismatch repair protein MutS of Chlorobium chlorochromatii (strain CaD3).